A 288-amino-acid polypeptide reads, in one-letter code: 4-diphosphocytidyl-2-C-methyl-D-erythritol kinase (288 aa).

Residue lysine 13 is part of the active site. Position 96 to 106 (96 to 106 (PMGGGIGGGSS)) interacts with ATP. Aspartate 138 is an active-site residue.

It belongs to the GHMP kinase family. IspE subfamily.

The catalysed reaction is 4-CDP-2-C-methyl-D-erythritol + ATP = 4-CDP-2-C-methyl-D-erythritol 2-phosphate + ADP + H(+). Its pathway is isoprenoid biosynthesis; isopentenyl diphosphate biosynthesis via DXP pathway; isopentenyl diphosphate from 1-deoxy-D-xylulose 5-phosphate: step 3/6. Functionally, catalyzes the phosphorylation of the position 2 hydroxy group of 4-diphosphocytidyl-2C-methyl-D-erythritol. The protein is 4-diphosphocytidyl-2-C-methyl-D-erythritol kinase of Aliivibrio fischeri (strain ATCC 700601 / ES114) (Vibrio fischeri).